A 74-amino-acid chain; its full sequence is Defensin (74 aa).

The N-terminal stretch at 1–21 (MRGIYICLVFVLVCGLVSGLA) is a signal peptide. Positions 22 to 34 (DVPAESEMAHLRV) are excised as a propeptide. 3 disulfide bridges follow: Cys-40-Cys-61, Cys-47-Cys-69, and Cys-51-Cys-71.

As to expression, expressed in the hemocytes, fat body and ovaries.

It localises to the secreted. Its function is as follows. Antibacterial peptide mostly active against Gram-positive bacteria. The protein is Defensin of Rhipicephalus microplus (Cattle tick).